The sequence spans 118 residues: Large ribosomal subunit protein uL22 (118 aa).

Belongs to the universal ribosomal protein uL22 family. In terms of assembly, part of the 50S ribosomal subunit.

Its function is as follows. This protein binds specifically to 23S rRNA; its binding is stimulated by other ribosomal proteins, e.g. L4, L17, and L20. It is important during the early stages of 50S assembly. It makes multiple contacts with different domains of the 23S rRNA in the assembled 50S subunit and ribosome. Functionally, the globular domain of the protein is located near the polypeptide exit tunnel on the outside of the subunit, while an extended beta-hairpin is found that lines the wall of the exit tunnel in the center of the 70S ribosome. This Levilactobacillus brevis (strain ATCC 367 / BCRC 12310 / CIP 105137 / JCM 1170 / LMG 11437 / NCIMB 947 / NCTC 947) (Lactobacillus brevis) protein is Large ribosomal subunit protein uL22.